Here is a 504-residue protein sequence, read N- to C-terminus: MTTKIKSEEISSIIKERIENFNINIDISETGKVIAYADGVAKVYGLNNVMYYEMVEFDTGDTGIAFNLEESSVGVVVLGSGRTIKEGTSVKRLKKLMKVPVGDAIVGRVINTLGEPIDGKGAIEANEYRFVEEKAPGIMARKSVHQPLQTGLKAIDALVPIGRGQRELIIGDRQTGKTTVAIDTIINQKGQDVICIYVAVGQKESTVAQVVRKLEEHGAMDYTVVVNAPASFSAAMQFLAPYTGVTIGEYFRDNARHALIIYDDLSKHAVAYREMSLILRRPPGREAFPGDVFYLHSRLLERAAKLNDELGAGSLTALPIIETQAGDVAAYIPTNVISITDGQIFLETDLFNSGIRPAINVGLSVSRVGGAAQIKATKQVAGTLRLDLAQYRELQAFSQFASDLDESSRKQLERGQRMVEILKQPPYSPLSIEKQVIIIYAGANGYLDNIPANKVIKFESELYPFLEAKYPKIFEDISVKKAIDKETEAELSKALEEFKINFGA.

An ATP-binding site is contributed by 171–178 (GDRQTGKT).

The protein belongs to the ATPase alpha/beta chains family. As to quaternary structure, F-type ATPases have 2 components, CF(1) - the catalytic core - and CF(0) - the membrane proton channel. CF(1) has five subunits: alpha(3), beta(3), gamma(1), delta(1), epsilon(1). CF(0) has three main subunits: a(1), b(2) and c(9-12). The alpha and beta chains form an alternating ring which encloses part of the gamma chain. CF(1) is attached to CF(0) by a central stalk formed by the gamma and epsilon chains, while a peripheral stalk is formed by the delta and b chains.

The protein resides in the cell inner membrane. It carries out the reaction ATP + H2O + 4 H(+)(in) = ADP + phosphate + 5 H(+)(out). Functionally, produces ATP from ADP in the presence of a proton gradient across the membrane. The alpha chain is a regulatory subunit. This chain is ATP synthase subunit alpha, found in Helicobacter hepaticus (strain ATCC 51449 / 3B1).